The sequence spans 197 residues: MPKVGMQPIRRQQLIEATLTAIDQVGMGDASIALIARLAGVSNGIISHYFKDKNGLIAATMRYLMNALIDNVHERRLALTDDSPRAHLQVIIEGNFDASQVNGPAMKTWLAFWATSMHHPSLHRLQRINDQRLYSNLCCQFRRVLPLPHARKAARGLAALIDGLWLRGALSGDAFDTAQAQRIAYEYMDFQLAKQVS.

One can recognise an HTH tetR-type domain in the interval P8–L68. Positions S31–F50 form a DNA-binding region, H-T-H motif.

The protein operates within amine and polyamine biosynthesis; betaine biosynthesis via choline pathway [regulation]. Functionally, repressor involved in the biosynthesis of the osmoprotectant glycine betaine. It represses transcription of the choline transporter BetT and the genes of BetAB involved in the synthesis of glycine betaine. This Pseudomonas fluorescens (strain SBW25) protein is HTH-type transcriptional regulator BetI.